The following is a 186-amino-acid chain: Ribosome-recycling factor (186 aa).

It belongs to the RRF family.

It is found in the cytoplasm. Responsible for the release of ribosomes from messenger RNA at the termination of protein biosynthesis. May increase the efficiency of translation by recycling ribosomes from one round of translation to another. The sequence is that of Ribosome-recycling factor from Maricaulis maris (strain MCS10) (Caulobacter maris).